We begin with the raw amino-acid sequence, 418 residues long: Gamma-glutamyl phosphate reductase (418 aa).

The protein belongs to the gamma-glutamyl phosphate reductase family.

Its subcellular location is the cytoplasm. It carries out the reaction L-glutamate 5-semialdehyde + phosphate + NADP(+) = L-glutamyl 5-phosphate + NADPH + H(+). Its pathway is amino-acid biosynthesis; L-proline biosynthesis; L-glutamate 5-semialdehyde from L-glutamate: step 2/2. In terms of biological role, catalyzes the NADPH-dependent reduction of L-glutamate 5-phosphate into L-glutamate 5-semialdehyde and phosphate. The product spontaneously undergoes cyclization to form 1-pyrroline-5-carboxylate. The sequence is that of Gamma-glutamyl phosphate reductase from Chlorobium limicola (strain DSM 245 / NBRC 103803 / 6330).